The chain runs to 82 residues: ATP synthase subunit c (82 aa).

Helical transmembrane passes span A7–G27 and F57–A77.

Belongs to the ATPase C chain family. As to quaternary structure, F-type ATPases have 2 components, F(1) - the catalytic core - and F(0) - the membrane proton channel. F(1) has five subunits: alpha(3), beta(3), gamma(1), delta(1), epsilon(1). F(0) has four main subunits: a(1), b(1), b'(1) and c(10-14). The alpha and beta chains form an alternating ring which encloses part of the gamma chain. F(1) is attached to F(0) by a central stalk formed by the gamma and epsilon chains, while a peripheral stalk is formed by the delta, b and b' chains.

It localises to the cellular thylakoid membrane. Functionally, f(1)F(0) ATP synthase produces ATP from ADP in the presence of a proton or sodium gradient. F-type ATPases consist of two structural domains, F(1) containing the extramembraneous catalytic core and F(0) containing the membrane proton channel, linked together by a central stalk and a peripheral stalk. During catalysis, ATP synthesis in the catalytic domain of F(1) is coupled via a rotary mechanism of the central stalk subunits to proton translocation. Key component of the F(0) channel; it plays a direct role in translocation across the membrane. A homomeric c-ring of between 10-14 subunits forms the central stalk rotor element with the F(1) delta and epsilon subunits. In Prochlorococcus marinus (strain MIT 9303), this protein is ATP synthase subunit c.